The primary structure comprises 492 residues: Pyrin and HIN domain-containing protein 1 (492 aa).

Residues 1–88 enclose the Pyrin domain; the sequence is MANNYKKIVL…AETLKREKLK (88 aa). Disordered stretches follow at residues 106-199 and 400-492; these read KTKQ…KPLA and KNTN…PAVP. Over residues 142–159 the composition is skewed to basic and acidic residues; it reads PSEEETGTKRSKMSKEQT. Residues 160-173 are compositionally biased toward polar residues; it reads RPSCSAGASTSTAM. Residues 181–194 show a composition bias toward low complexity; the sequence is TSSSAPPNTSSTES. Residues 199–399 form the HIN-200 domain; it reads ANRHATASKN…SEMHSFIQIQ (201 aa). 2 stretches are compositionally biased toward polar residues: residues 416–432 and 460–492; these read QEQS…TTLP and GAQS…PAVP.

The protein belongs to the HIN-200 family. As to quaternary structure, interacts with MDM2. Expressed in spleen, lymph node and peripheral blood leukocytes, and at lower levels in thymus, bone marrow and fetal liver. Down-regulated in breast tumors.

It localises to the nucleus. It is found in the nucleoplasm. The protein localises to the nucleus speckle. In terms of biological role, major mediator of the tumor suppressor activity of IFN in breast cancer cells. Promotes ubiquitination and subsequent degradation of MDM2, which leads to p53/TP53 stabilization. Promotes ubiquitination and subsequent degradation of HDAC1, which in turn enhances maspin expression, and impairs invasive activity of cancer cells. The protein is Pyrin and HIN domain-containing protein 1 (PYHIN1) of Homo sapiens (Human).